The following is a 1233-amino-acid chain: Reverse gyrase 2 (1233 aa).

The segment at 1–41 adopts an RG N-terminal-type zinc-finger fold; the sequence is MNTIPSSNYLSSCPNCGRVISAERLYKGSVCSECLEEDREF. Residues Cys-13, Cys-16, Cys-31, and Cys-34 each contribute to the Zn(2+) site. ATP contacts are provided by residues Gln-89 and 106 to 113; that span reads APPGLGKT. The 204-residue stretch at 93–296 folds into the Helicase ATP-binding domain; the sequence is IIRVLRKESF…ALMGFRPGSS (204 aa). Residues 212 to 215 carry the DEAD box motif; sequence DDVD. The tract at residues 606-1233 is topoisomerase I; the sequence is QKVKTVLFIV…DIYYEIKSIR (628 aa). The region spanning 610–774 is the Toprim domain; sequence TVLFIVESPN…NIKRAEFHEV (165 aa). Position 616 (Glu-616) interacts with Mg(2+). The RG C-terminal-type; atypical zinc finger occupies 691–720; it reads IKKCINGHQFTDFEQGNQCPKCHTTQIILD. Zn(2+) contacts are provided by Cys-694, His-698, Cys-709, and Cys-712. Position 743 (Asp-743) interacts with Mg(2+). A Topo IA-type catalytic domain is found at 790–1233; it reads NVNLVKSQIV…DIYYEIKSIR (444 aa). Tyr-947 serves as the catalytic O-(5'-phospho-DNA)-tyrosine intermediate.

In the N-terminal section; belongs to the DEAD box helicase family. DDVD subfamily. This sequence in the C-terminal section; belongs to the type IA topoisomerase family. In terms of assembly, monomer. Requires Zn(2+) as cofactor. The cofactor is Mg(2+).

The protein resides in the cytoplasm. The enzyme catalyses ATP + H2O = ADP + phosphate + H(+). Its function is as follows. Modifies the topological state of DNA by introducing positive supercoils in an ATP-dependent process, increasing the linking number in steps of +1. Binds to single-stranded DNA, transiently cleaves and then rejoins the ends, introducing a positive supercoil in the process. The scissile phosphodiester is attacked by the catalytic tyrosine of the enzyme, resulting in the formation of a DNA-(5'-phosphotyrosyl)-enzyme intermediate. Probably involved in rewinding DNA strands in regions of the chromosome that have opened up to allow replication, transcription, DNA repair and/or for DNA protection. This is Reverse gyrase 2 from Sulfurisphaera tokodaii (strain DSM 16993 / JCM 10545 / NBRC 100140 / 7) (Sulfolobus tokodaii).